The sequence spans 896 residues: Rho GTPase-activating protein gacM (896 aa).

The tract at residues 1-97 is disordered; that stretch reads MSSFIGWKKN…SSNDTIGKSS (97 aa). Over residues 10–26 the composition is skewed to low complexity; it reads NSNSGGTPGASPTSSSP. A compositionally biased stretch (polar residues) spans 27–38; the sequence is LNSTISNANSVS. Low complexity-rich tracts occupy residues 45–57 and 65–97; these read SISN…LSSS and NSNN…GKSS. Residues 139-330 enclose the Rho-GAP domain; that stretch reads QPINPNTEFG…LWIEEFDMIS (192 aa). 4 stretches are compositionally biased toward low complexity: residues 375-391, 400-427, 448-460, and 473-506; these read IQQQ…QSHP, SSLS…LLPT, PTPT…TPQT, and NNNS…NNNN. Disordered regions lie at residues 375-514 and 701-770; these read IQQQ…GSPL and LPTG…ENQI. Residues 702-711 are compositionally biased toward polar residues; sequence PTGSSWSDFE. Composition is skewed to low complexity over residues 712 to 743 and 751 to 761; these read NNSS…NSSP and SNGLNSSSNSN.

It is found in the cytoplasm. In terms of biological role, rho GTPase-activating protein involved in the signal transduction pathway. In Dictyostelium discoideum (Social amoeba), this protein is Rho GTPase-activating protein gacM (gacM).